Consider the following 391-residue polypeptide: PPE family protein PPE18 (391 aa).

It belongs to the mycobacterial PPE family. Interacts with human TLR2.

The protein resides in the secreted. The protein localises to the cell wall. It localises to the cell surface. Could be a crucial virulence factor for intracellular survival of M.tuberculosis. Favors development of Th2-type response, and down-regulates the pro-inflammatory and Th1-type response. Specifically interacts with the human Toll-like receptor 2 (TLR2), leading to an early and sustained activation of p38 MAPK, which induces IL-10 production and activates Th2-type immune response. Also inhibits pro-inflammatory cytokines IL-12p40 and TNF-alpha production. Acts by up-regulating the expression as well as tyrosine phosphorylation of suppressor of cytokine signaling 3 (SOCS-3), leading to the inhibition of phosphorylation of I-kappa-B-alpha, thereby preventing nuclear translocation of the NF-kappa-B/REL subunits and expression of NF-kappa-B regulated genes like IL-12 and TNF-alpha. Induction of SOCS-3 probably depends on the activation of p38 MAPK. This chain is PPE family protein PPE18, found in Mycobacterium tuberculosis (strain ATCC 25618 / H37Rv).